A 652-amino-acid chain; its full sequence is Probable L-type lectin-domain containing receptor kinase S.5 (652 aa).

An N-terminal signal peptide occupies residues 1 to 20; the sequence is MRFSLAWKLLFLILTCKIET. At 21–266 the chain is on the extracellular side; it reads QVKCLKFDFP…EGLKIDGDGN (246 aa). The legume-lectin like stretch occupies residues 24–257; it reads CLKFDFPGFN…LNCVRSWSFE (234 aa). N-linked (GlcNAc...) asparagine glycosylation is found at Asn-33, Asn-91, Asn-97, Asn-100, Asn-122, Asn-139, Asn-201, and Asn-244. Residues 267–287 form a helical membrane-spanning segment; that stretch reads MLWLWITIPIVFIVGIGAFLG. Residues 288–652 lie on the Cytoplasmic side of the membrane; sequence ALYLRSRSKA…INSLTELTGR (365 aa). Residues 330 to 622 enclose the Protein kinase domain; the sequence is FGAENKLGQG…PDVPTERPAF (293 aa). ATP-binding positions include 336 to 344 and Lys-357; that span reads LGQGGFGMV. Asp-455 acts as the Proton acceptor in catalysis.

The protein in the C-terminal section; belongs to the protein kinase superfamily. Ser/Thr protein kinase family. This sequence in the N-terminal section; belongs to the leguminous lectin family.

It is found in the cell membrane. The enzyme catalyses L-seryl-[protein] + ATP = O-phospho-L-seryl-[protein] + ADP + H(+). It carries out the reaction L-threonyl-[protein] + ATP = O-phospho-L-threonyl-[protein] + ADP + H(+). This Arabidopsis thaliana (Mouse-ear cress) protein is Probable L-type lectin-domain containing receptor kinase S.5 (LECRKS5).